The sequence spans 199 residues: MTTLTAQQIACVYAWLAQLFSRELDDEQLTQIASAQMAEWFSLLKSEPPLTAAVNELENCVATLTVRDDARLELAADFCGLFLMTDKQAALPYASAYKQDEQEIKRLLVEAGMETSGNFNEPADHLAIYLELLSHLHFSLGEGTVPARRIDSLRQKTLTALWQWLPEFVARCHQYDSFGFYAALSQLLLVLVEGDHQNR.

The protein belongs to the TorD/DmsD family. TorD subfamily.

Its subcellular location is the cytoplasm. Its function is as follows. Involved in the biogenesis of TorA. Acts on TorA before the insertion of the molybdenum cofactor and, as a result, probably favors a conformation of the apoenzyme that is competent for acquiring the cofactor. The chain is Chaperone protein TorD from Shigella dysenteriae serotype 1 (strain Sd197).